Consider the following 114-residue polypeptide: Flagellar hook-basal body complex protein FliE (114 aa).

The protein belongs to the FliE family.

It is found in the bacterial flagellum basal body. The chain is Flagellar hook-basal body complex protein FliE from Desulfitobacterium hafniense (strain Y51).